A 236-amino-acid polypeptide reads, in one-letter code: Protein YIPF6 (236 aa).

At Ala-2 the chain carries N-acetylalanine. Over 2 to 84 the chain is Cytoplasmic; the sequence is AEAEESPGDP…HVLYPRKSNT (83 aa). The residue at position 7 (Ser-7) is a Phosphoserine. A helical transmembrane segment spans residues 85-105; that stretch reads LLRDWDLWGPLILCVTLALML. The Lumenal portion of the chain corresponds to 106–115; it reads QRDSADSEKD. The helical transmembrane segment at 116–136 threads the bilayer; it reads GGPQFAEVFVIVWFGAVTITL. Residues 137-146 lie on the Cytoplasmic side of the membrane; the sequence is NSKLLGGNIS. The chain crosses the membrane as a helical span at residues 147-167; the sequence is FFQSLCVLGYCILPLTVAMLI. The Lumenal segment spans residues 168–184; it reads CRLVLLADPGPVNFMVR. Residues 185–205 traverse the membrane as a helical segment; that stretch reads LFVVIVMFAWSIVASTAFLAD. The Cytoplasmic portion of the chain corresponds to 206 to 212; the sequence is SQPPNRR. The chain crosses the membrane as a helical span at residues 213–233; sequence ALAVYPVFLFYFVISWMILTF. At 234–236 the chain is on the lumenal side; that stretch reads TPQ.

It belongs to the YIP1 family. In terms of assembly, predominantly interacts with YIPF1 or YIPF2, but may also form a ternary complex with YIPF1 and YIPF2. This interaction may stabilize YIPF1 and YIPF2.

The protein resides in the golgi apparatus membrane. In terms of biological role, may be required for stable YIPF1 and YIPF2 protein expression. This chain is Protein YIPF6 (YIPF6), found in Homo sapiens (Human).